A 507-amino-acid polypeptide reads, in one-letter code: Type II methyltransferase M.PstI (507 aa).

The protein belongs to the N(4)/N(6)-methyltransferase family. Monomer.

It catalyses the reaction a 2'-deoxyadenosine in DNA + S-adenosyl-L-methionine = an N(6)-methyl-2'-deoxyadenosine in DNA + S-adenosyl-L-homocysteine + H(+). A gamma subtype methylase that recognizes the double-stranded sequence 5'-CTGCAG-3', methylates A-5 on both strands, and protects the DNA from cleavage by the PstI endonuclease. This is Type II methyltransferase M.PstI (pstIM) from Providencia stuartii.